We begin with the raw amino-acid sequence, 1032 residues long: Phosphoenolpyruvate carboxylase 4 (1032 aa).

The active site involves histidine 154. Residues 377-407 (PNLQKQNEQDFSESDWEKIDNGSRSGLTSRG) form a disordered region. A compositionally biased stretch (polar residues) spans 398-407 (GSRSGLTSRG). Lysine 699 is a catalytic residue.

The protein belongs to the PEPCase type 1 family. In terms of assembly, homotetramer. Mg(2+) is required as a cofactor. As to expression, expressed at low levels in flowers and siliques, and detectable in roots.

It localises to the cytoplasm. It catalyses the reaction oxaloacetate + phosphate = phosphoenolpyruvate + hydrogencarbonate. In terms of biological role, through the carboxylation of phosphoenolpyruvate (PEP) it forms oxaloacetate, a four-carbon dicarboxylic acid source for the tricarboxylic acid cycle. In Arabidopsis thaliana (Mouse-ear cress), this protein is Phosphoenolpyruvate carboxylase 4 (PPC4).